The sequence spans 232 residues: Peptidoglycan-recognition protein LB (232 aa).

The first 15 residues, 1–15 (MTALGLVLLSMMGYS), serve as a signal peptide directing secretion. Positions 53 to 179 (APYVIIHHSY…RQVRDTECPG (127 aa)) constitute an N-acetylmuramoyl-L-alanine amidase domain. Residue histidine 59 participates in Zn(2+) binding. Cysteines 67 and 73 form a disulfide. Histidine 169 and cysteine 177 together coordinate Zn(2+). The N-linked (GlcNAc...) asparagine glycan is linked to asparagine 196. Residues 213 to 232 (HPQAAAPQKPHQSPPAAPKV) form a disordered region.

The protein belongs to the N-acetylmuramoyl-L-alanine amidase 2 family. As to quaternary structure, monomer. Requires Zn(2+) as cofactor. As to expression, widely expressed.

It is found in the secreted. The catalysed reaction is Hydrolyzes the link between N-acetylmuramoyl residues and L-amino acid residues in certain cell-wall glycopeptides.. Functionally, N-acetylmuramyl-L-alanine amidase involved in innate immunity by degrading bacterial peptidoglycans (PGN). Probably plays a scavenger role by digesting biologically active PGN into biologically inactive fragments. Has no direct bacteriolytic activity. The sequence is that of Peptidoglycan-recognition protein LB (PGRP-LB) from Drosophila melanogaster (Fruit fly).